The following is a 201-amino-acid chain: Small ribosomal subunit protein uS4 (201 aa).

Positions 91–157 constitute an S4 RNA-binding domain; that stretch reads SRLDNVIYRA…VPFQIARETV (67 aa).

This sequence belongs to the universal ribosomal protein uS4 family. Part of the 30S ribosomal subunit. Contacts protein S5. The interaction surface between S4 and S5 is involved in control of translational fidelity.

One of the primary rRNA binding proteins, it binds directly to 16S rRNA where it nucleates assembly of the body of the 30S subunit. In terms of biological role, with S5 and S12 plays an important role in translational accuracy. The protein is Small ribosomal subunit protein uS4 of Mycobacterium leprae (strain Br4923).